The primary structure comprises 338 residues: Ferrochelatase (338 aa).

His189 and Glu294 together coordinate Fe cation.

Belongs to the ferrochelatase family.

It is found in the cytoplasm. It catalyses the reaction heme b + 2 H(+) = protoporphyrin IX + Fe(2+). It functions in the pathway porphyrin-containing compound metabolism; protoheme biosynthesis; protoheme from protoporphyrin-IX: step 1/1. Functionally, catalyzes the ferrous insertion into protoporphyrin IX. This Pseudomonas putida (strain ATCC 47054 / DSM 6125 / CFBP 8728 / NCIMB 11950 / KT2440) protein is Ferrochelatase.